Reading from the N-terminus, the 557-residue chain is NADP-dependent malic enzyme (557 aa).

Tyr-91 functions as the Proton donor in the catalytic mechanism. Arg-144 contributes to the NADP(+) binding site. Residues Arg-144 and Lys-162 each coordinate substrate. Residue Lys-162 is the Proton acceptor of the active site. Mn(2+) contacts are provided by Glu-234 and Asp-235. Position 238 (Asn-238) interacts with NADP(+). Asp-258 lines the Mn(2+) pocket. NADP(+) contacts are provided by residues 291–294, Ser-325, Asn-397, and Asn-443; that span reads AGEA. Asn-443 serves as a coordination point for substrate.

Belongs to the malic enzymes family. As to quaternary structure, homotetramer. It depends on Mg(2+) as a cofactor. Mn(2+) serves as cofactor. Post-translationally, the N-terminus is blocked.

It is found in the cytoplasm. It carries out the reaction (S)-malate + NADP(+) = pyruvate + CO2 + NADPH. The catalysed reaction is oxaloacetate + H(+) = pyruvate + CO2. In Columba livia (Rock dove), this protein is NADP-dependent malic enzyme (ME1).